We begin with the raw amino-acid sequence, 314 residues long: tRNA dimethylallyltransferase (314 aa).

ATP is bound at residue 16 to 23 (GPTGVGKT). Substrate is bound at residue 18–23 (TGVGKT). The segment at 41–44 (DSMQ) is interaction with substrate tRNA.

This sequence belongs to the IPP transferase family. Monomer. Requires Mg(2+) as cofactor.

The catalysed reaction is adenosine(37) in tRNA + dimethylallyl diphosphate = N(6)-dimethylallyladenosine(37) in tRNA + diphosphate. Functionally, catalyzes the transfer of a dimethylallyl group onto the adenine at position 37 in tRNAs that read codons beginning with uridine, leading to the formation of N6-(dimethylallyl)adenosine (i(6)A). This Desulfosudis oleivorans (strain DSM 6200 / JCM 39069 / Hxd3) (Desulfococcus oleovorans) protein is tRNA dimethylallyltransferase.